The sequence spans 180 residues: uncharacterized protein (180 aa).

An N-terminal signal peptide occupies residues Met-1 to Ala-24.

Part of the elfADCG-ycbUVF fimbrial operon, which promotes adhesion of bacteria to different abiotic surfaces. This is an uncharacterized protein from Escherichia coli (strain K12).